The sequence spans 351 residues: Methylthioribose-1-phosphate isomerase (351 aa).

Catalysis depends on D244, which acts as the Proton donor.

Belongs to the eIF-2B alpha/beta/delta subunits family. MtnA subfamily.

Its subcellular location is the cytoplasm. It is found in the nucleus. It catalyses the reaction 5-(methylsulfanyl)-alpha-D-ribose 1-phosphate = 5-(methylsulfanyl)-D-ribulose 1-phosphate. The protein operates within amino-acid biosynthesis; L-methionine biosynthesis via salvage pathway; L-methionine from S-methyl-5-thio-alpha-D-ribose 1-phosphate: step 1/6. Functionally, catalyzes the interconversion of methylthioribose-1-phosphate (MTR-1-P) into methylthioribulose-1-phosphate (MTRu-1-P). In Anopheles gambiae (African malaria mosquito), this protein is Methylthioribose-1-phosphate isomerase.